The chain runs to 505 residues: Cytochrome P450 4Z1 (505 aa).

At 1–9 the chain is on the cytoplasmic side; the sequence is MEPSWLQEL. The chain crosses the membrane as a helical; Signal-anchor for type II membrane protein span at residues 10-30; that stretch reads MAHPFLLLILLCMSLLLFQVI. Residues 31–505 lie on the Lumenal side of the membrane; that stretch reads RLYQRRRWMI…GIHVFAKKVC (475 aa). A heme-binding site is contributed by Cys452.

This sequence belongs to the cytochrome P450 family. Requires heme as cofactor. In terms of tissue distribution, preferentially detected in breast carcinoma tissue and mammary gland, whereas only marginal expression is found in all other tested tissues.

The protein localises to the endoplasmic reticulum membrane. The protein resides in the microsome membrane. The enzyme catalyses an organic molecule + reduced [NADPH--hemoprotein reductase] + O2 = an alcohol + oxidized [NADPH--hemoprotein reductase] + H2O + H(+). It carries out the reaction dodecanoate + reduced [NADPH--hemoprotein reductase] + O2 = 7-hydroxydodecanoate + oxidized [NADPH--hemoprotein reductase] + H2O + H(+). The catalysed reaction is dodecanoate + reduced [NADPH--hemoprotein reductase] + O2 = 8-hydroxydodecanoate + oxidized [NADPH--hemoprotein reductase] + H2O + H(+). It catalyses the reaction dodecanoate + reduced [NADPH--hemoprotein reductase] + O2 = 9-hydroxydodecanoate + oxidized [NADPH--hemoprotein reductase] + H2O + H(+). The enzyme catalyses dodecanoate + reduced [NADPH--hemoprotein reductase] + O2 = 10-hydroxydodecanoate + oxidized [NADPH--hemoprotein reductase] + H2O + H(+). It carries out the reaction dodecanoate + reduced [NADPH--hemoprotein reductase] + O2 = 11-hydroxydodecanoate + oxidized [NADPH--hemoprotein reductase] + H2O + H(+). The catalysed reaction is tetradecanoate + reduced [NADPH--hemoprotein reductase] + O2 = 9-hydroxytetradecanoate + oxidized [NADPH--hemoprotein reductase] + H2O + H(+). It catalyses the reaction tetradecanoate + reduced [NADPH--hemoprotein reductase] + O2 = 10-hydroxytetradecanoate + oxidized [NADPH--hemoprotein reductase] + H2O + H(+). The enzyme catalyses tetradecanoate + reduced [NADPH--hemoprotein reductase] + O2 = 11-hydroxytetradecanoate + oxidized [NADPH--hemoprotein reductase] + H2O + H(+). It carries out the reaction tetradecanoate + reduced [NADPH--hemoprotein reductase] + O2 = 12-hydroxytetradecanoate + oxidized [NADPH--hemoprotein reductase] + H2O + H(+). The catalysed reaction is (5Z,8Z,11Z,14Z)-eicosatetraenoate + reduced [NADPH--hemoprotein reductase] + O2 = (14S,15R)-epoxy-(5Z,8Z,11Z)-eicosatrienoate + oxidized [NADPH--hemoprotein reductase] + H2O + H(+). Functionally, a cytochrome P450 monooxygenase that catalyzes the in-chain oxidation of fatty acids. Catalyzes the hydroxylation of carbon-hydrogen bonds. Hydroxylates lauric and myristic acids predominantly at the omega-4 and omega-2 positions, respectively. Catalyzes the epoxidation of double bonds of polyunsaturated fatty acids (PUFA). Displays an absolute stereoselectivity in the epoxidation of arachidonic acid producing the 14(S),15(R)-epoxyeicosatrienoic acid (EET) enantiomer. Mechanistically, uses molecular oxygen inserting one oxygen atom into a substrate, and reducing the second into a water molecule, with two electrons provided by NADPH via cytochrome P450 reductase (CPR; NADPH-ferrihemoprotein reductase). This chain is Cytochrome P450 4Z1, found in Homo sapiens (Human).